The chain runs to 126 residues: UPF0538 protein C2orf76 homolog (126 aa).

Belongs to the UPF0538 family.

This Pongo abelii (Sumatran orangutan) protein is UPF0538 protein C2orf76 homolog.